The sequence spans 121 residues: Small ribosomal subunit protein uS13 (121 aa).

The segment at 91–121 (HRKGLPMRGQRTRTNARTRKGPRKAGVALKK) is disordered.

The protein belongs to the universal ribosomal protein uS13 family. Part of the 30S ribosomal subunit. Forms a loose heterodimer with protein S19. Forms two bridges to the 50S subunit in the 70S ribosome.

Located at the top of the head of the 30S subunit, it contacts several helices of the 16S rRNA. In the 70S ribosome it contacts the 23S rRNA (bridge B1a) and protein L5 of the 50S subunit (bridge B1b), connecting the 2 subunits; these bridges are implicated in subunit movement. Contacts the tRNAs in the A and P-sites. In Cupriavidus taiwanensis (strain DSM 17343 / BCRC 17206 / CCUG 44338 / CIP 107171 / LMG 19424 / R1) (Ralstonia taiwanensis (strain LMG 19424)), this protein is Small ribosomal subunit protein uS13.